The primary structure comprises 294 residues: Shell matrix protein (294 aa).

In terms of tissue distribution, component of the organic matrix of calcified shell layers like nacre and prisms.

It localises to the secreted. In Mytilus californianus (California mussel), this protein is Shell matrix protein.